The sequence spans 289 residues: Porin (289 aa).

Homotrimer.

The protein localises to the cell outer membrane. Functionally, forms channels that allow the passive diffusion of small hydrophilic solutes up to an exclusion limit of about 0.6 kDa. This is Porin (opmA) from Fuscovulum blasticum (Rhodobacter blasticus).